The chain runs to 191 residues: Abscisic acid receptor PYR1 (191 aa).

Residues 23-176 (YQLDPGSCSS…NLQKLATVAE (154 aa)) are START-like. Residue Lys-59 participates in abscisate binding. Phosphothreonine; by CARK1 is present on Thr-78. The Gate loop signature appears at 85-89 (SGLPA). Abscisate is bound by residues 89–94 (ANTSTE), 116–122 (RLTNYKS), and Glu-141. The Latch loop signature appears at 115–117 (HRL).

The protein belongs to the PYR/PYL/RCAR abscisic acid intracellular receptor family. Homodimer. Binds ABA on one subunit only. Interacts with HAB1, AHG3, ABI1 and ABI2 when complexed to ABA, and possibly with other PP2Cs. Binds to CARs protein in an ABA-independent manner, both at the plasma membrane and in the nucleus. Interacts directly with CAR1 and CAR4. Interacts with CARK1 in the cytosol. Interacts with AIP1 in an abscisic acid-dependent manner. Interacts with FREE1 (via N-terminus). Interacts with the E3 ubiquitin-protein ligase RSL1 at the plasma membrane. Ubiquitynated and degraded by the proteasome upon binding to the E3 ubiquitin-protein ligase RSL1 at the plasma membrane. Post-translationally, phosphorylated by CARK1 especially in response to abscisic acid (ABA); this phosphorylation promotes its stability and inhibitory ability to ABI1.

Its subcellular location is the cytoplasm. The protein resides in the cytosol. It localises to the nucleus. It is found in the cell membrane. The protein localises to the vacuole. In terms of biological role, receptor for abscisic acid (ABA) required for ABA-mediated responses such as stomatal closure and germination inhibition. Inhibits the activity of group-A protein phosphatases type 2C (PP2Cs) when activated by ABA. Can be activated by both (-)-ABA and (+)-ABA. Promotes drought tolerance. The polypeptide is Abscisic acid receptor PYR1 (Arabidopsis thaliana (Mouse-ear cress)).